We begin with the raw amino-acid sequence, 474 residues long: Ribosomal RNA small subunit methyltransferase F (474 aa).

Residues 121–127 (ASAPGSK), Glu145, Asp172, and Asp190 each bind S-adenosyl-L-methionine. Catalysis depends on Cys243, which acts as the Nucleophile.

This sequence belongs to the class I-like SAM-binding methyltransferase superfamily. RsmB/NOP family.

The protein localises to the cytoplasm. It carries out the reaction cytidine(1407) in 16S rRNA + S-adenosyl-L-methionine = 5-methylcytidine(1407) in 16S rRNA + S-adenosyl-L-homocysteine + H(+). Functionally, specifically methylates the cytosine at position 1407 (m5C1407) of 16S rRNA. The polypeptide is Ribosomal RNA small subunit methyltransferase F (Shewanella piezotolerans (strain WP3 / JCM 13877)).